We begin with the raw amino-acid sequence, 980 residues long: Peroxisomal ATPase PEX6 (980 aa).

Arg-119 carries the post-translational modification Omega-N-methylarginine. Residues 470–477 (GPPGCGKT) and 744–751 (GPPGTGKT) each bind ATP.

Belongs to the AAA ATPase family. As to quaternary structure, interacts with PEX1; forming the PEX1-PEX6 AAA ATPase complex, which is composed of a heterohexamer formed by a trimer of PEX1-PEX6 dimers. Interacts with PEX26; interaction is direct and promotes recruitment to peroxisomal membranes. Interacts with ZFAND6. As to expression, expressed in the retina, at higher levels in the photoreceptor layer at the joint between the outer and inner segments.

It is found in the cytoplasm. The protein resides in the cytosol. Its subcellular location is the peroxisome membrane. The protein localises to the cell projection. It localises to the cilium. It is found in the photoreceptor outer segment. It catalyses the reaction ATP + H2O = ADP + phosphate + H(+). Functionally, component of the PEX1-PEX6 AAA ATPase complex, a protein dislocase complex that mediates the ATP-dependent extraction of the PEX5 receptor from peroxisomal membranes, an essential step for PEX5 recycling. Specifically recognizes PEX5 monoubiquitinated at 'Cys-11', and pulls it out of the peroxisome lumen through the PEX2-PEX10-PEX12 retrotranslocation channel. Extraction by the PEX1-PEX6 AAA ATPase complex is accompanied by unfolding of the TPR repeats and release of bound cargo from PEX5. The chain is Peroxisomal ATPase PEX6 from Homo sapiens (Human).